Reading from the N-terminus, the 57-residue chain is Large ribosomal subunit protein bL32 (57 aa).

The span at 1–22 shows a compositional bias: basic residues; the sequence is MAVPKKKTSKAKRDQRRAHWRR. A disordered region spans residues 1-35; the sequence is MAVPKKKTSKAKRDQRRAHWRRQASSQAQKALSLG.

The protein belongs to the bacterial ribosomal protein bL32 family.

This chain is Large ribosomal subunit protein bL32 (rpmF), found in Synechocystis sp. (strain ATCC 27184 / PCC 6803 / Kazusa).